The following is a 68-amino-acid chain: Large ribosomal subunit protein uL29 (68 aa).

Belongs to the universal ribosomal protein uL29 family.

The protein is Large ribosomal subunit protein uL29 of Erythrobacter litoralis (strain HTCC2594).